We begin with the raw amino-acid sequence, 677 residues long: Methionine--tRNA ligase (677 aa).

The 'HIGH' region signature appears at 15–25 (PYANGSIHLGH). Zn(2+)-binding residues include Cys-146, Cys-149, Cys-159, and Cys-162. The 'KMSKS' region motif lies at 333–337 (KMSKS). Lys-336 contacts ATP. Residues 575–677 (DFAKVDLRVA…AGAKPGHQVK (103 aa)) form the tRNA-binding domain.

This sequence belongs to the class-I aminoacyl-tRNA synthetase family. MetG type 1 subfamily. In terms of assembly, homodimer. Requires Zn(2+) as cofactor.

It is found in the cytoplasm. The catalysed reaction is tRNA(Met) + L-methionine + ATP = L-methionyl-tRNA(Met) + AMP + diphosphate. In terms of biological role, is required not only for elongation of protein synthesis but also for the initiation of all mRNA translation through initiator tRNA(fMet) aminoacylation. The chain is Methionine--tRNA ligase from Escherichia coli (strain SE11).